Here is a 122-residue protein sequence, read N- to C-terminus: Ribonuclease P protein component 1 (122 aa).

It belongs to the eukaryotic/archaeal RNase P protein component 1 family. Consists of a catalytic RNA component and at least 4-5 protein subunits.

It is found in the cytoplasm. The enzyme catalyses Endonucleolytic cleavage of RNA, removing 5'-extranucleotides from tRNA precursor.. Its function is as follows. Part of ribonuclease P, a protein complex that generates mature tRNA molecules by cleaving their 5'-ends. This is Ribonuclease P protein component 1 from Thermococcus sibiricus (strain DSM 12597 / MM 739).